The primary structure comprises 103 residues: Small ribosomal subunit protein uS10 (103 aa).

Belongs to the universal ribosomal protein uS10 family. Part of the 30S ribosomal subunit.

Involved in the binding of tRNA to the ribosomes. This chain is Small ribosomal subunit protein uS10, found in Laribacter hongkongensis (strain HLHK9).